An 82-amino-acid polypeptide reads, in one-letter code: RNA-binding protein Hfq (82 aa).

Residues 9-68 (DPYLNTLRKERVPVSIYLVNGIKLQGQIESFDQFVILLKNTVSQMVYKHAISTVVPSRPV) enclose the Sm domain.

It belongs to the Hfq family. Homohexamer.

Its function is as follows. RNA chaperone that binds small regulatory RNA (sRNAs) and mRNAs to facilitate mRNA translational regulation in response to envelope stress, environmental stress and changes in metabolite concentrations. Also binds with high specificity to tRNAs. This Pseudomonas aeruginosa (strain LESB58) protein is RNA-binding protein Hfq.